The chain runs to 303 residues: MNDAKKYIVSVLILLVAGMFGGCIKEDYSDCPRPFRLTVRAWDADMQDITETGAVQRVVIFVFDETGRRIDRLMMDAAQVAARKPIPLEYDGPTTVSFVAWANPDDHMLEETANVQNVKDLFFRLSSTDGIAQSPGDLFSGVLTCPIEYGSIEQGTDQTVDIYRRTAQVHIIIRGYQEWLEANGPRQLPDYADILLGETPDTYTGLAELIGNAVQYRPDGQIQNGDFISPIIRVYPTLDTTPLHLKLYAYGQELLNISTGSDGVPFIPVIGKMLNIYIDLRGANLNVLVSVTPWDVVQQYAEY.

The first 22 residues, 1–22, serve as a signal peptide directing secretion; the sequence is MNDAKKYIVSVLILLVAGMFGG. The N-palmitoyl cysteine moiety is linked to residue C23. A lipid anchor (S-diacylglycerol cysteine) is attached at C23.

It belongs to the bacteroidetes fimbrillin superfamily. FimB/Mfa2 family. In terms of assembly, fimB is not part of the fimbrium itself, but anchors the fimbrium in the outer membrane. Linear, head-to-tail oligomerization of fimbrial subunits mediates assembly of the fimbrium stalk, while the minor components FimC, FimD and FimE probably form the fimbrium tip. The anchoring subunit FimB limits fimbrium length and is important for solid fimbrium attachment to the outer membrane. In its absence, the major fimbriae become very long and are easily detached from the membrane.

It localises to the cell outer membrane. Its function is as follows. Anchoring subunit of the major fimbriae. Regulates fimbrial length. These filamentous pili are attached to the cell surface; they mediate biofilm formation, adhesion onto host cells and onto other bacteria that are part of the oral microbiome. Fimbriae of P.gingivalis are major virulence factors. This chain is Major fimbrium anchoring subunit FimB, found in Porphyromonas gingivalis (strain ATCC 33277 / DSM 20709 / CIP 103683 / JCM 12257 / NCTC 11834 / 2561).